Here is a 287-residue protein sequence, read N- to C-terminus: ATP synthase subunit a (287 aa).

A run of 6 helical transmembrane segments spans residues 37–57, 96–116, 149–169, 187–207, 224–244, and 266–286; these read LDSV…MWLA, FIAP…AMDL, LGLS…IKGL, PVFA…EYVA, ELVF…LSGV, and TLQA…AHEA.

Belongs to the ATPase A chain family. As to quaternary structure, F-type ATPases have 2 components, CF(1) - the catalytic core - and CF(0) - the membrane proton channel. CF(1) has five subunits: alpha(3), beta(3), gamma(1), delta(1), epsilon(1). CF(0) has three main subunits: a(1), b(2) and c(9-12). The alpha and beta chains form an alternating ring which encloses part of the gamma chain. CF(1) is attached to CF(0) by a central stalk formed by the gamma and epsilon chains, while a peripheral stalk is formed by the delta and b chains.

It localises to the cell inner membrane. Functionally, key component of the proton channel; it plays a direct role in the translocation of protons across the membrane. This is ATP synthase subunit a from Acidovorax sp. (strain JS42).